Reading from the N-terminus, the 256-residue chain is 1-(5-phosphoribosyl)-5-[(5-phosphoribosylamino)methylideneamino] imidazole-4-carboxamide isomerase (256 aa).

Asp-8 serves as the catalytic Proton acceptor. Asp-129 (proton donor) is an active-site residue.

It belongs to the HisA/HisF family.

It is found in the cytoplasm. The enzyme catalyses 1-(5-phospho-beta-D-ribosyl)-5-[(5-phospho-beta-D-ribosylamino)methylideneamino]imidazole-4-carboxamide = 5-[(5-phospho-1-deoxy-D-ribulos-1-ylimino)methylamino]-1-(5-phospho-beta-D-ribosyl)imidazole-4-carboxamide. It participates in amino-acid biosynthesis; L-histidine biosynthesis; L-histidine from 5-phospho-alpha-D-ribose 1-diphosphate: step 4/9. This is 1-(5-phosphoribosyl)-5-[(5-phosphoribosylamino)methylideneamino] imidazole-4-carboxamide isomerase from Prochlorococcus marinus (strain NATL1A).